The following is a 709-amino-acid chain: ATP-binding cassette sub-family F member 3 (709 aa).

The residue at position 2 (Ala-2) is an N-acetylalanine. The residue at position 83 (Ser-83) is a Phosphoserine. A compositionally biased stretch (basic and acidic residues) spans 129 to 143; that stretch reads RLKAKQEKRSEKDTL. The disordered stretch occupies residues 129-171; that stretch reads RLKAKQEKRSEKDTLKTSNPLVLEEASASQAGSRKESRLESSG. Ser-155, Ser-157, and Ser-161 each carry phosphoserine. A compositionally biased stretch (basic and acidic residues) spans 161–171; sequence SRKESRLESSG. ABC transporter domains lie at 178–424 and 492–707; these read VRIE…LNQQ and LQLD…RREG. 210-217 serves as a coordination point for ATP; it reads GRNGLGKT. The residue at position 283 (Ser-283) is a Phosphoserine. An ATP-binding site is contributed by 525 to 532; it reads GENGAGKS.

It belongs to the ABC transporter superfamily. ABCF family. EF3 subfamily.

Displays an antiviral effect against flaviviruses in the presence of OAS1B. This chain is ATP-binding cassette sub-family F member 3 (ABCF3), found in Pongo abelii (Sumatran orangutan).